The chain runs to 556 residues: Glucose-6-phosphate isomerase (556 aa).

The active-site Proton donor is glutamate 360. Catalysis depends on residues histidine 391 and lysine 519.

The protein belongs to the GPI family.

The protein resides in the cytoplasm. The enzyme catalyses alpha-D-glucose 6-phosphate = beta-D-fructose 6-phosphate. It participates in carbohydrate biosynthesis; gluconeogenesis. The protein operates within carbohydrate degradation; glycolysis; D-glyceraldehyde 3-phosphate and glycerone phosphate from D-glucose: step 2/4. Functionally, catalyzes the reversible isomerization of glucose-6-phosphate to fructose-6-phosphate. This Acinetobacter baumannii (strain ATCC 17978 / DSM 105126 / CIP 53.77 / LMG 1025 / NCDC KC755 / 5377) protein is Glucose-6-phosphate isomerase.